Here is a 90-residue protein sequence, read N- to C-terminus: Probable Fe(2+)-trafficking protein (90 aa).

Belongs to the Fe(2+)-trafficking protein family.

Functionally, could be a mediator in iron transactions between iron acquisition and iron-requiring processes, such as synthesis and/or repair of Fe-S clusters in biosynthetic enzymes. This chain is Probable Fe(2+)-trafficking protein, found in Nitrosococcus oceani (strain ATCC 19707 / BCRC 17464 / JCM 30415 / NCIMB 11848 / C-107).